We begin with the raw amino-acid sequence, 186 residues long: Dynactin subunit 3 (186 aa).

Ala-2 is subject to N-acetylalanine. The stretch at 46 to 66 forms a coiled coil; that stretch reads NIASKRERVKILYKKIEDLIK.

The protein belongs to the dynactin subunit 3 family. In terms of assembly, subunit of dynactin, a multiprotein complex part of a tripartite complex with dynein and a adapter, such as BICDL1, BICD2 or HOOK3. The dynactin complex is built around ACTR1A/ACTB filament and consists of an actin-related filament composed of a shoulder domain, a pointed end and a barbed end. Its length is defined by its flexible shoulder domain. The soulder is composed of 2 DCTN1 subunits, 4 DCTN2 and 2 DCTN3. The 4 DCNT2 (via N-terminus) bind the ACTR1A filament and act as molecular rulers to determine the length. The pointed end is important for binding dynein-dynactin cargo adapters. Consists of 4 subunits: ACTR10, DCNT4, DCTN5 and DCTN6. The barbed end is composed of a CAPZA1:CAPZB heterodimers, which binds ACTR1A/ACTB filament and dynactin and stabilizes dynactin.

It localises to the cytoplasm. The protein localises to the cytoskeleton. It is found in the microtubule organizing center. The protein resides in the centrosome. Its subcellular location is the chromosome. It localises to the centromere. The protein localises to the kinetochore. It is found in the spindle. The protein resides in the cleavage furrow. Its subcellular location is the midbody. Functionally, part of the dynactin complex that activates the molecular motor dynein for ultra-processive transport along microtubules. Together with dynein may be involved in spindle assembly and cytokinesis. This is Dynactin subunit 3 from Mus musculus (Mouse).